The chain runs to 126 residues: Holo-[acyl-carrier-protein] synthase (126 aa).

Residues aspartate 9 and glutamate 58 each coordinate Mg(2+).

This sequence belongs to the P-Pant transferase superfamily. AcpS family. It depends on Mg(2+) as a cofactor.

It is found in the cytoplasm. It catalyses the reaction apo-[ACP] + CoA = holo-[ACP] + adenosine 3',5'-bisphosphate + H(+). In terms of biological role, transfers the 4'-phosphopantetheine moiety from coenzyme A to a Ser of acyl-carrier-protein. The polypeptide is Holo-[acyl-carrier-protein] synthase (Salmonella paratyphi B (strain ATCC BAA-1250 / SPB7)).